Here is a 249-residue protein sequence, read N- to C-terminus: MPIGMPKIPFLLDGDEEDEEEDDATWVDLYNVLYRTRSIFLGDAIHFEVANHIAGLMIFLTIQDATQNLYFFINSPGGLAVAGLLIYDTMQYVTPPVYTLGLGVLASMASFLLVGGETSKRLMGPNGRVMIHQPESDYTHKDQSLEVQLDSGEVEDIRKMVIRVYLERTRLPREVLNDHLERNYFMTATEAKYYGIVDDIGIQNLLARLRAESASQDNSLDPDAPDESASQDNSLDPDAPDETRPPKLR.

The active-site Nucleophile is S107. H132 is a catalytic residue. The segment at 212–249 (ESASQDNSLDPDAPDESASQDNSLDPDAPDETRPPKLR) is disordered.

This sequence belongs to the peptidase S14 family. As to quaternary structure, component of the chloroplastic Clp protease core complex.

It localises to the plastid. It is found in the chloroplast stroma. The enzyme catalyses Hydrolysis of proteins to small peptides in the presence of ATP and magnesium. alpha-casein is the usual test substrate. In the absence of ATP, only oligopeptides shorter than five residues are hydrolyzed (such as succinyl-Leu-Tyr-|-NHMec, and Leu-Tyr-Leu-|-Tyr-Trp, in which cleavage of the -Tyr-|-Leu- and -Tyr-|-Trp bonds also occurs).. Functionally, cleaves peptides in various proteins in a process that requires ATP hydrolysis. Has a chymotrypsin-like activity. Plays a major role in the degradation of misfolded proteins. The polypeptide is ATP-dependent Clp protease proteolytic subunit (Oenothera elata subsp. hookeri (Hooker's evening primrose)).